Consider the following 432-residue polypeptide: Neuropeptide FF receptor 1 (432 aa).

The Extracellular portion of the chain corresponds to 1–43; sequence MEAEPSQPPNGSWPLGQNGSDVETSMATSLTFSSYYQHSSPVA. Residues N10 and N18 are each glycosylated (N-linked (GlcNAc...) asparagine). Residues 44-64 traverse the membrane as a helical segment; that stretch reads AMFIAAYVLIFLLCMVGNTLV. Residues 65-80 are Cytoplasmic-facing; it reads CFIVLKNRHMRTVTNM. Residues 81-101 form a helical membrane-spanning segment; that stretch reads FILNLAVSDLLVGIFCMPTTL. The Extracellular segment spans residues 102-117; that stretch reads VDNLITGWPFDNATCK. N-linked (GlcNAc...) asparagine glycosylation is present at N113. A disulfide bridge connects residues C116 and C203. Residues 118–138 traverse the membrane as a helical segment; the sequence is MSGLVQGMSVSASVFTLVAIA. Residues 139–158 lie on the Cytoplasmic side of the membrane; sequence VERFRCIVHPFREKLTLRKA. Residues 159–179 form a helical membrane-spanning segment; sequence LFTIAVIWALALLIMCPSAVT. Over 180 to 214 the chain is Extracellular; the sequence is LTVTREEHHFMLDARNRSYPLYSCWEAWPEKGMRK. N195 is a glycosylation site (N-linked (GlcNAc...) asparagine). A helical membrane pass occupies residues 215-235; it reads VYTAVLFAHIYLVPLALIVVM. Over 236 to 273 the chain is Cytoplasmic; the sequence is YVRIARKLCQAPGPARDTEEAVAEGGRTSRRRARVVHM. Residues 274–294 form a helical membrane-spanning segment; the sequence is LVMVALFFTLSWLPLWVLLLL. At 295 to 309 the chain is on the extracellular side; it reads IDYGELSELQLHLLS. A helical membrane pass occupies residues 310–330; it reads VYAFPLAHWLAFFHSSANPII. The Cytoplasmic segment spans residues 331–432; that stretch reads YGYFNENFRR…MPLTIPAWNI (102 aa). Residues 380-406 are compositionally biased toward low complexity; it reads PSDSGLPSESGPSSGVPGPGRLPLRNG. Positions 380-422 are disordered; the sequence is PSDSGLPSESGPSSGVPGPGRLPLRNGRVAHQDGPGEGPGCNH.

The protein belongs to the G-protein coupled receptor 1 family. Expressed at high levels in the hypothalamus. Moderate levels found in the midbrain, thalamus, medulla oblongata, testis, eye, whole brain, cerebral cortex, striatum, hippocampus, cerebellum, optic nerve, placenta, spinal cord, pituitary gland and ovary.

The protein localises to the cell membrane. In terms of biological role, receptor for NPAF (A-18-F-amide) and NPFF (F-8-F-amide) neuropeptides, also known as morphine-modulating peptides. Can also be activated by a variety of naturally occurring or synthetic FMRF-amide like ligands. This receptor mediates its action by association with G proteins that activate a phosphatidylinositol-calcium second messenger system. This is Neuropeptide FF receptor 1 (Npffr1) from Rattus norvegicus (Rat).